A 128-amino-acid polypeptide reads, in one-letter code: Ribonuclease P protein component (128 aa).

The protein belongs to the RnpA family. Consists of a catalytic RNA component (M1 or rnpB) and a protein subunit.

The enzyme catalyses Endonucleolytic cleavage of RNA, removing 5'-extranucleotides from tRNA precursor.. In terms of biological role, RNaseP catalyzes the removal of the 5'-leader sequence from pre-tRNA to produce the mature 5'-terminus. It can also cleave other RNA substrates such as 4.5S RNA. The protein component plays an auxiliary but essential role in vivo by binding to the 5'-leader sequence and broadening the substrate specificity of the ribozyme. In Synechococcus sp. (strain CC9902), this protein is Ribonuclease P protein component.